Reading from the N-terminus, the 453-residue chain is Bifunctional protein GlmU (453 aa).

The segment at 1-227 (MTQLSVVILA…LMEVEGANNR (227 aa)) is pyrophosphorylase. Residues 9–12 (LAAG), Lys23, Gln74, 79–80 (GT), 101–103 (YGD), Gly138, Glu152, Asn167, and Asn225 each bind UDP-N-acetyl-alpha-D-glucosamine. Residue Asp103 coordinates Mg(2+). Asn225 serves as a coordination point for Mg(2+). Residues 228-248 (LQLAALERYYQKIQAEKLLLA) form a linker region. Residues 249–453 (GVTIIDPARF…IQGWQRPTKK (205 aa)) form an N-acetyltransferase region. Arg331 and Lys349 together coordinate UDP-N-acetyl-alpha-D-glucosamine. Catalysis depends on His361, which acts as the Proton acceptor. 2 residues coordinate UDP-N-acetyl-alpha-D-glucosamine: Tyr364 and Asn375. Residues Ala378, 384–385 (NY), Ser403, Ala421, and Arg438 contribute to the acetyl-CoA site.

It in the N-terminal section; belongs to the N-acetylglucosamine-1-phosphate uridyltransferase family. In the C-terminal section; belongs to the transferase hexapeptide repeat family. Homotrimer. Mg(2+) is required as a cofactor.

It localises to the cytoplasm. It carries out the reaction alpha-D-glucosamine 1-phosphate + acetyl-CoA = N-acetyl-alpha-D-glucosamine 1-phosphate + CoA + H(+). The catalysed reaction is N-acetyl-alpha-D-glucosamine 1-phosphate + UTP + H(+) = UDP-N-acetyl-alpha-D-glucosamine + diphosphate. It functions in the pathway nucleotide-sugar biosynthesis; UDP-N-acetyl-alpha-D-glucosamine biosynthesis; N-acetyl-alpha-D-glucosamine 1-phosphate from alpha-D-glucosamine 6-phosphate (route II): step 2/2. The protein operates within nucleotide-sugar biosynthesis; UDP-N-acetyl-alpha-D-glucosamine biosynthesis; UDP-N-acetyl-alpha-D-glucosamine from N-acetyl-alpha-D-glucosamine 1-phosphate: step 1/1. It participates in bacterial outer membrane biogenesis; LPS lipid A biosynthesis. Its function is as follows. Catalyzes the last two sequential reactions in the de novo biosynthetic pathway for UDP-N-acetylglucosamine (UDP-GlcNAc). The C-terminal domain catalyzes the transfer of acetyl group from acetyl coenzyme A to glucosamine-1-phosphate (GlcN-1-P) to produce N-acetylglucosamine-1-phosphate (GlcNAc-1-P), which is converted into UDP-GlcNAc by the transfer of uridine 5-monophosphate (from uridine 5-triphosphate), a reaction catalyzed by the N-terminal domain. This Glaesserella parasuis serovar 5 (strain SH0165) (Haemophilus parasuis) protein is Bifunctional protein GlmU.